The primary structure comprises 886 residues: Leucine--tRNA ligase (886 aa).

Residues P51–H61 carry the 'HIGH' region motif. The short motif at K644–S648 is the 'KMSKS' region element. K647 serves as a coordination point for ATP.

The protein belongs to the class-I aminoacyl-tRNA synthetase family.

The protein resides in the cytoplasm. The catalysed reaction is tRNA(Leu) + L-leucine + ATP = L-leucyl-tRNA(Leu) + AMP + diphosphate. The sequence is that of Leucine--tRNA ligase from Bartonella tribocorum (strain CIP 105476 / IBS 506).